A 204-amino-acid chain; its full sequence is Guanylate kinase (204 aa).

The Guanylate kinase-like domain maps to 5-184 (GLLLVLSGPS…AVDHIKSIVE (180 aa)). ATP is bound at residue 12–19 (GPSGVGKG).

This sequence belongs to the guanylate kinase family.

It localises to the cytoplasm. The enzyme catalyses GMP + ATP = GDP + ADP. In terms of biological role, essential for recycling GMP and indirectly, cGMP. The chain is Guanylate kinase from Lactobacillus johnsonii (strain CNCM I-12250 / La1 / NCC 533).